Consider the following 792-residue polypeptide: MLSNHLQNGIESDNLLWSRVPESDDTSTDDITLLNSHRDGDGGVNSLDYEVIENYAYREEQAHRGKLYVGYYVAVKWFFSLLIGIGTGLAAVFINLSVENFAGWKFALTFAIIQKSYFAGFIVYLLINLVLVFSSAYIITQFAPAAAGSGIPEIKGYLNGIDIPGTLLFRTLIGKIFGSIGSVGGGLALGKEGPLVHTGACIASLLGQGGSTKYHLNSRWPQLFKSDRDRRDLVTCGCAAGVAAAFRAPVGGVLFALEEVTSWWRSQLMWRVFFTSAIVAVVVRTAMGWCKSGICGHFGGGGFIIWDVSDGQDDYYFKELLPMAVIGVIGGLLGALFNQLTLYMTSWRRNSLHKKGNRVKIIEACIISCITSAISFGLPLLRKCSPCPESVPDSGIECPRPPGMYGNYVNFFCKTDNEYNDLATIFFNTQDDAIRNLFSAKTMREFSAQSLLTFLAMFYTLAVVTFGTAVPAGQFVPGIMIGSTYGRLVGMFVVRFYKKLNIEEGTYALLGAASFLGGSMRMTVSLCVIMVEITNNLKLLPLIMLVLLISKAVGDAFNEGLYEVQARLKGIPLLESRPKYHMRQMIAKEACQSQKVISLPRVIRVADVASILGSNKHNGFPVIDHTRSGETLVIGLVLRSHLLVLLQSKVDFQHSPLPCDPSARNIRHSFSEFAKPVSSKGLCIEDIHLTSDDLEMYIDLAPFLNPSPYVVPEDMSLTKVYNLFRQLGLRHLFVVPRPSRVIGLITRKDLLIEENGESSAVELQQSTSVRGRYSETATRMDAARPLLDDLLG.

Transmembrane regions (helical) follow at residues 78–98 (FFSL…NLSV), 119–139 (AGFI…AYII), 170–190 (RTLI…LALG), 195–215 (LVHT…TKYH), 237–257 (GCAA…LFAL), 267–287 (QLMW…RTAM), 320–340 (LLPM…FNQL), 361–381 (IIEA…LPLL), 451–471 (LLTF…TAVP), 474–494 (QFVP…MFVV), 508–528 (ALLG…SLCV), and 529–549 (IMVE…VLLI). CBS domains lie at 592 to 652 (QSQK…KVDF) and 704 to 761 (LNPS…SSAV). Residues 731–751 (HLFVVPRPSRVIGLITRKDLL) traverse the membrane as a helical segment.

It belongs to the chloride channel (TC 2.A.49) family. Homodimer. In terms of tissue distribution, broadly expressed in the plant, but predominantly in the silique.

Its subcellular location is the membrane. Functionally, voltage-gated chloride channel. This Arabidopsis thaliana (Mouse-ear cress) protein is Chloride channel protein CLC-d (CLC-D).